The primary structure comprises 220 residues: Serine protease-like protein 51 (220 aa).

An N-terminal signal peptide occupies residues 1–16 (MFQLLIPLLLALKGHA). A Peptidase S1 domain is found at 23–220 (VQCGHRPAFP…SSKWVSSVGA (198 aa)). Asn-33 carries N-linked (GlcNAc...) asparagine glycosylation. A disulfide bridge connects residues Cys-64 and Cys-80. Asn-92 carries an N-linked (GlcNAc...) asparagine glycan. Cys-157 and Cys-170 are oxidised to a cystine.

Belongs to the peptidase S1 family.

The protein localises to the secreted. The protein is Serine protease-like protein 51 of Homo sapiens (Human).